Consider the following 628-residue polypeptide: DNA mismatch repair protein MutL (628 aa).

Residues Ser-335–Pro-411 form a disordered region. Over residues Glu-343–Thr-353 the composition is skewed to polar residues.

It belongs to the DNA mismatch repair MutL/HexB family.

Functionally, this protein is involved in the repair of mismatches in DNA. It is required for dam-dependent methyl-directed DNA mismatch repair. May act as a 'molecular matchmaker', a protein that promotes the formation of a stable complex between two or more DNA-binding proteins in an ATP-dependent manner without itself being part of a final effector complex. This chain is DNA mismatch repair protein MutL, found in Shewanella pealeana (strain ATCC 700345 / ANG-SQ1).